The following is a 256-amino-acid chain: Rhamnolipids biosynthesis 3-oxoacyl-[acyl-carrier-protein] reductase (256 aa).

NADP(+) is bound at residue 14-38; sequence VTGGSRGIGQMIAQGLLEAGARVFI. Serine 148 serves as a coordination point for substrate. Tyrosine 162 (proton acceptor) is an active-site residue.

The protein belongs to the short-chain dehydrogenases/reductases (SDR) family.

It catalyses the reaction a (3R)-hydroxyacyl-[ACP] + NADP(+) = a 3-oxoacyl-[ACP] + NADPH + H(+). The protein operates within lipid metabolism; rhamnolipid biosynthesis. In terms of biological role, required for the synthesis of the beta-hydroxy acid moiety of rhamnolipids. The chain is Rhamnolipids biosynthesis 3-oxoacyl-[acyl-carrier-protein] reductase (rhlG) from Pseudomonas aeruginosa (strain ATCC 15692 / DSM 22644 / CIP 104116 / JCM 14847 / LMG 12228 / 1C / PRS 101 / PAO1).